Here is a 518-residue protein sequence, read N- to C-terminus: Cytochrome P450 1A1 (518 aa).

The interval 33 to 44 (SKPRVPKGLKRL) is mitochondrial targeting signal. The O-linked (GlcNAc) serine glycan is linked to serine 71. Position 228 (phenylalanine 228) interacts with substrate. Cysteine 461 serves as a coordination point for heme.

This sequence belongs to the cytochrome P450 family. In terms of assembly, interacts with cytosolic chaperones HSP70 and HSP90; this interaction is required for initial targeting to mitochondria. Interacts (via mitochondrial targeting signal) with TOMM40 (via N-terminus); this interaction is required for translocation across the mitochondrial outer membrane. The cofactor is heme.

It localises to the endoplasmic reticulum membrane. Its subcellular location is the mitochondrion inner membrane. It is found in the microsome membrane. The protein localises to the cytoplasm. The catalysed reaction is an organic molecule + reduced [NADPH--hemoprotein reductase] + O2 = an alcohol + oxidized [NADPH--hemoprotein reductase] + H2O + H(+). It carries out the reaction estrone + reduced [NADPH--hemoprotein reductase] + O2 = 2-hydroxyestrone + oxidized [NADPH--hemoprotein reductase] + H2O + H(+). It catalyses the reaction estrone + reduced [NADPH--hemoprotein reductase] + O2 = 4-hydroxyestrone + oxidized [NADPH--hemoprotein reductase] + H2O + H(+). The enzyme catalyses estrone + reduced [NADPH--hemoprotein reductase] + O2 = 6alpha-hydroxyestrone + oxidized [NADPH--hemoprotein reductase] + H2O + H(+). The catalysed reaction is estrone + reduced [NADPH--hemoprotein reductase] + O2 = 15alpha-hydroxyestrone + oxidized [NADPH--hemoprotein reductase] + H2O + H(+). It carries out the reaction estrone + reduced [NADPH--hemoprotein reductase] + O2 = 16alpha-hydroxyestrone + oxidized [NADPH--hemoprotein reductase] + H2O + H(+). It catalyses the reaction 17beta-estradiol + reduced [NADPH--hemoprotein reductase] + O2 = 2-hydroxy-17beta-estradiol + oxidized [NADPH--hemoprotein reductase] + H2O + H(+). The enzyme catalyses 17beta-estradiol + reduced [NADPH--hemoprotein reductase] + O2 = 4-hydroxy-17beta-estradiol + oxidized [NADPH--hemoprotein reductase] + H2O + H(+). The catalysed reaction is 17beta-estradiol + reduced [NADPH--hemoprotein reductase] + O2 = 6alpha-hydroxy-17beta-estradiol + oxidized [NADPH--hemoprotein reductase] + H2O + H(+). It carries out the reaction 17beta-estradiol + reduced [NADPH--hemoprotein reductase] + O2 = 7alpha-hydroxy-17beta-estradiol + oxidized [NADPH--hemoprotein reductase] + H2O + H(+). It catalyses the reaction 17beta-estradiol + reduced [NADPH--hemoprotein reductase] + O2 = 15alpha-hydroxy-17beta-estradiol + oxidized [NADPH--hemoprotein reductase] + H2O + H(+). The enzyme catalyses (5Z,8Z,11Z)-eicosatrienoate + reduced [NADPH--hemoprotein reductase] + O2 = 19-hydroxy-(5Z,8Z,11Z)-eicosatrienoate + oxidized [NADPH--hemoprotein reductase] + H2O + H(+). The catalysed reaction is (5Z,8Z,11Z,14Z)-eicosatetraenoate + reduced [NADPH--hemoprotein reductase] + O2 = 16-hydroxy-(5Z,8Z,11Z,14Z)-eicosatetraenoate + oxidized [NADPH--hemoprotein reductase] + H2O + H(+). It carries out the reaction (5Z,8Z,11Z,14Z)-eicosatetraenoate + reduced [NADPH--hemoprotein reductase] + O2 = 17-hydroxy-(5Z,8Z,11Z,14Z)-eicosatetraenoate + oxidized [NADPH--hemoprotein reductase] + H2O + H(+). It catalyses the reaction (5Z,8Z,11Z,14Z)-eicosatetraenoate + reduced [NADPH--hemoprotein reductase] + O2 = 18-hydroxy-(5Z,8Z,11Z,14Z)-eicosatetraenoate + oxidized [NADPH--hemoprotein reductase] + H2O + H(+). The enzyme catalyses (5Z,8Z,11Z,14Z)-eicosatetraenoate + reduced [NADPH--hemoprotein reductase] + O2 = 19-hydroxy-(5Z,8Z,11Z,14Z)-eicosatetraenoate + oxidized [NADPH--hemoprotein reductase] + H2O + H(+). The catalysed reaction is (5Z,8Z,11Z,14Z,17Z)-eicosapentaenoate + reduced [NADPH--hemoprotein reductase] + O2 = 19-hydroxy-(5Z,8Z,11Z,14Z,17Z)-eicosapentaenoate + oxidized [NADPH--hemoprotein reductase] + H2O + H(+). It carries out the reaction (5Z,8Z,11Z,14Z)-eicosatetraenoate + reduced [NADPH--hemoprotein reductase] + O2 = (8R,9S)-epoxy-(5Z,11Z,14Z)-eicosatrienoate + oxidized [NADPH--hemoprotein reductase] + H2O + H(+). It catalyses the reaction (5Z,8Z,11Z,14Z)-eicosatetraenoate + reduced [NADPH--hemoprotein reductase] + O2 = (11R,12S)-epoxy-(5Z,8Z,14Z)-eicosatrienoate + oxidized [NADPH--hemoprotein reductase] + H2O + H(+). The enzyme catalyses (5Z,8Z,11Z,14Z)-eicosatetraenoate + reduced [NADPH--hemoprotein reductase] + O2 = (14S,15R)-epoxy-(5Z,8Z,11Z)-eicosatrienoate + oxidized [NADPH--hemoprotein reductase] + H2O + H(+). The catalysed reaction is (5Z,8Z,11Z,14Z)-eicosatetraenoate + reduced [NADPH--hemoprotein reductase] + O2 = (14R,15S)-epoxy-(5Z,8Z,11Z)-eicosatrienoate + oxidized [NADPH--hemoprotein reductase] + H2O + H(+). It carries out the reaction (5Z,8Z,11Z,14Z,17Z)-eicosapentaenoate + reduced [NADPH--hemoprotein reductase] + O2 = (17R,18S)-epoxy-(5Z,8Z,11Z,14Z)-eicosatetraenoate + oxidized [NADPH--hemoprotein reductase] + H2O + H(+). It catalyses the reaction (4Z,7Z,10Z,13Z,16Z,19Z)-docosahexaenoate + reduced [NADPH--hemoprotein reductase] + O2 = (19S,20R)-epoxy-(4Z,7Z,10Z,13Z,16Z)-docosapentaenoate + oxidized [NADPH--hemoprotein reductase] + H2O + H(+). The enzyme catalyses (4Z,7Z,10Z,13Z,16Z,19Z)-docosahexaenoate + reduced [NADPH--hemoprotein reductase] + O2 = (19R,20S)-epoxy-(4Z,7Z,10Z,13Z,16Z)-docosapentaenoate + oxidized [NADPH--hemoprotein reductase] + H2O + H(+). The catalysed reaction is all-trans-retinol + reduced [NADPH--hemoprotein reductase] + O2 = all-trans-retinal + oxidized [NADPH--hemoprotein reductase] + 2 H2O + H(+). It carries out the reaction all-trans-retinal + reduced [NADPH--hemoprotein reductase] + O2 = all-trans-retinoate + oxidized [NADPH--hemoprotein reductase] + H2O + 2 H(+). It catalyses the reaction (13S)-hydroperoxy-(9Z,11E)-octadecadienoate = 13-oxo-(9Z,11E)-octadecadienoate + H2O. The enzyme catalyses (12S)-hydroperoxy-(5Z,8Z,10E,14Z)-eicosatetraenoate = 12-oxo-(5Z,8Z,10E,14Z)-eicosatetraenoate + H2O. The catalysed reaction is (15S)-hydroperoxy-(5Z,8Z,11Z,13E)-eicosatetraenoate = 15-oxo-(5Z,8Z,11Z,13E)-eicosatetraenoate + H2O. It carries out the reaction (5S)-hydroperoxy-(6E,8Z,11Z,14Z)-eicosatetraenoate = 5-oxo-(6E,8Z,11Z,14Z)-eicosatetraenoate + H2O. It participates in steroid hormone biosynthesis. The protein operates within lipid metabolism; fatty acid metabolism. Its pathway is cofactor metabolism; retinol metabolism. In terms of biological role, a cytochrome P450 monooxygenase involved in the metabolism of various endogenous substrates, including fatty acids, steroid hormones and vitamins. Mechanistically, uses molecular oxygen inserting one oxygen atom into a substrate, and reducing the second into a water molecule, with two electrons provided by NADPH via cytochrome P450 reductase (CPR; NADPH-ferrihemoprotein reductase). Catalyzes the hydroxylation of carbon-hydrogen bonds. Exhibits high catalytic activity for the formation of hydroxyestrogens from estrone (E1) and 17beta-estradiol (E2), namely 2-hydroxy E1 and E2, as well as D-ring hydroxylated E1 and E2 at the C15alpha and C16alpha positions. Displays different regioselectivities for polyunsaturated fatty acids (PUFA) hydroxylation. Catalyzes the epoxidation of double bonds of certain PUFA. Converts arachidonic acid toward epoxyeicosatrienoic acid (EET) regioisomers, 8,9-, 11,12-, and 14,15-EET, that function as lipid mediators in the vascular system. Displays an absolute stereoselectivity in the epoxidation of eicosapentaenoic acid (EPA) producing the 17(R),18(S) enantiomer. May play an important role in all-trans retinoic acid biosynthesis in extrahepatic tissues. Catalyzes two successive oxidative transformation of all-trans retinol to all-trans retinal and then to the active form all-trans retinoic acid. May also participate in eicosanoids metabolism by converting hydroperoxide species into oxo metabolites (lipoxygenase-like reaction, NADPH-independent). The chain is Cytochrome P450 1A1 (CYP1A1) from Oryctolagus cuniculus (Rabbit).